The following is an 85-amino-acid chain: UPF0291 protein SpyM3_1470 (85 aa).

A disordered region spans residues 62–85 (TPEKLRQVQREKGLHGRSLDDPKS).

This sequence belongs to the UPF0291 family.

It is found in the cytoplasm. The polypeptide is UPF0291 protein SpyM3_1470 (Streptococcus pyogenes serotype M3 (strain ATCC BAA-595 / MGAS315)).